The following is a 273-amino-acid chain: Eukaryotic translation initiation factor 3 subunit J (273 aa).

Residues 1 to 158 (MPTKKWEDEE…DPSDPSKTVE (158 aa)) are disordered. Positions 34–54 (DEEANDSDVLDSWDAAEDSEV) are enriched in acidic residues. Residues 50 to 97 (EDSEVEREKAKKAAEAKAKAEAEAKANKKTKAARINEHKQRRKEAEES) are a coiled coil. Over residues 55–75 (EREKAKKAAEAKAKAEAEAKA) the composition is skewed to basic and acidic residues. Residues 95–104 (EESDESDDET) show a composition bias toward acidic residues. The span at 105–126 (ESQRRERLRRTEKEADLAHAED) shows a compositional bias: basic and acidic residues.

It belongs to the eIF-3 subunit J family. As to quaternary structure, component of the eukaryotic translation initiation factor 3 (eIF-3) complex.

It is found in the cytoplasm. In terms of biological role, component of the eukaryotic translation initiation factor 3 (eIF-3) complex, which is involved in protein synthesis of a specialized repertoire of mRNAs and, together with other initiation factors, stimulates binding of mRNA and methionyl-tRNAi to the 40S ribosome. The eIF-3 complex specifically targets and initiates translation of a subset of mRNAs involved in cell proliferation. The chain is Eukaryotic translation initiation factor 3 subunit J from Pyricularia oryzae (strain 70-15 / ATCC MYA-4617 / FGSC 8958) (Rice blast fungus).